Here is a 176-residue protein sequence, read N- to C-terminus: RNA pyrophosphohydrolase (176 aa).

The Nudix hydrolase domain occupies Gly-6–Phe-149. The short motif at Gly-38–Gly-59 is the Nudix box element.

It belongs to the Nudix hydrolase family. RppH subfamily. A divalent metal cation is required as a cofactor.

In terms of biological role, accelerates the degradation of transcripts by removing pyrophosphate from the 5'-end of triphosphorylated RNA, leading to a more labile monophosphorylated state that can stimulate subsequent ribonuclease cleavage. The protein is RNA pyrophosphohydrolase of Aromatoleum aromaticum (strain DSM 19018 / LMG 30748 / EbN1) (Azoarcus sp. (strain EbN1)).